Reading from the N-terminus, the 2752-residue chain is Serine/arginine repetitive matrix protein 2 (2752 aa).

Met-1 is modified (N-acetylmethionine). Positions 60-92 form a coiled coil; that stretch reads HERKRRVELRCLELEEMMEEQGYEEQQIQEKVA. An N6-acetyllysine modification is found at Lys-101. Glycyl lysine isopeptide (Lys-Gly) (interchain with G-Cter in SUMO2) cross-links involve residues Lys-108 and Lys-130. The tract at residues 141–2131 is disordered; the sequence is ISDSYVDGSS…MSPTPLDRCR (1991 aa). A Phosphotyrosine modification is found at Tyr-145. N6-acetyllysine is present on Lys-169. The segment covering 175-185 has biased composition (low complexity); the sequence is RESSSSRSPTP. Composition is skewed to basic residues over residues 186-197 and 207-249; these read KQKKKKKKKDRG and RERK…KRSR. Positions 197 to 259 are sufficient for RNA-binding; sequence GRRSESSSPR…STTPAPKSRR (63 aa). Residues Ser-220 and Ser-222 each carry the phosphoserine modification. Residues 263–290 are compositionally biased toward low complexity; that stretch reads STSADSASSSDTSRSRSRSAAAKTHTTA. The residue at position 286 (Thr-286) is a Phosphothreonine. Phosphoserine is present on residues Ser-295, Ser-297, Ser-300, Ser-322, and Ser-323. Polar residues predominate over residues 313–333; that stretch reads PGTTSTQRPSSPETATKQPSS. The segment covering 335-347 has biased composition (basic and acidic residues); sequence YEDKDKDKKEKSA. The span at 348-360 shows a compositional bias: low complexity; it reads TRPSPSPERSSTG. Ser-351, Ser-353, Ser-357, and Ser-358 each carry phosphoserine. Residues Thr-359 and Thr-367 each carry the phosphothreonine modification. Phosphoserine is present on Ser-377. Over residues 380–398 the composition is skewed to polar residues; sequence PLATTPLSQEPVNPPSEAS. 2 positions are modified to phosphothreonine: Thr-383 and Thr-384. A phosphoserine mark is found at Ser-387, Ser-395, Ser-398, Ser-404, and Ser-408. Over residues 399–410 the composition is skewed to basic and acidic residues; sequence PTRDRSPPKSPE. Residues 411–421 show a composition bias toward low complexity; sequence KLPQSSSSESS. Ser-424, Ser-435, Ser-436, Ser-437, Ser-440, and Ser-454 each carry phosphoserine. The span at 461 to 483 shows a compositional bias: basic residues; that stretch reads NRSHGRAKRDKSHSHTPSRRMGR. A phosphoserine mark is found at Ser-484, Ser-486, Ser-506, Ser-508, Ser-510, Ser-534, Ser-536, and Ser-543. Residues 491 to 536 are compositionally biased toward basic residues; that stretch reads KRGRSRSRTPTKRGHSRSRSPQWRRSRSAQRWGRSRSPQRRGRSRS. Positions 537 to 546 are enriched in low complexity; that stretch reads PQRPGWSRSR. Basic residues-rich tracts occupy residues 547 to 564, 571 to 723, and 732 to 742; these read NTQR…RSHS, GRSR…RRGR, and NKSRTSQRRSR. Phosphoserine occurs at positions 702, 704, and 706. Phosphoserine is present on residues Ser-778, Ser-780, and Ser-783. Residues 790-805 show a composition bias toward low complexity; sequence SQTPPRRSRSGSSQPK. Residues 806-816 show a composition bias toward basic residues; sequence AKSRTPPRRSR. A compositionally biased stretch (low complexity) spans 828 to 841; the sequence is KTPSRQSHSSSSPH. Residues Ser-846 and Ser-854 each carry the phosphoserine modification. A compositionally biased stretch (polar residues) spans 849 to 869; it reads PPRQGSITSPQANEQSVTPQR. Thr-856 bears the Phosphothreonine mark. Phosphoserine is present on residues Ser-857 and Ser-864. A Phosphothreonine modification is found at Thr-866. 14 positions are modified to phosphoserine: Ser-871, Ser-875, Ser-876, Ser-908, Ser-935, Ser-950, Ser-952, Ser-954, Ser-957, Ser-968, Ser-970, Ser-972, Ser-973, and Ser-974. 2 stretches are compositionally biased toward low complexity: residues 901–917 and 924–945; these read SSTP…SPQP and SPRQ…TSRT. Phosphothreonine is present on residues Thr-977 and Thr-983. A phosphoserine mark is found at Ser-992 and Ser-994. Tyr-996 is subject to Phosphotyrosine. Thr-1003 is modified (phosphothreonine). The segment covering 1008 to 1017 has biased composition (low complexity); sequence SLSGSKSPCP. 6 positions are modified to phosphoserine: Ser-1010, Ser-1014, Ser-1024, Ser-1028, Ser-1032, and Ser-1042. Polar residues predominate over residues 1040-1064; the sequence is KSSTPPGESYFGVSSLQLKGQSQTS. Thr-1043 is subject to Phosphothreonine. Phosphotyrosine is present on Tyr-1049. A phosphoserine mark is found at Ser-1064, Ser-1069, Ser-1072, Ser-1073, Ser-1083, Ser-1099, Ser-1101, Ser-1102, and Ser-1103. Positions 1071–1092 are enriched in polar residues; it reads TSSPEVRQSHSESPSLQSKSQT. Low complexity predominate over residues 1093–1104; that stretch reads SPKGGRSRSSSP. At Thr-1106 the chain carries Phosphothreonine. Ser-1112, Ser-1122, Ser-1124, Ser-1129, Ser-1132, Ser-1152, Ser-1179, Ser-1188, and Ser-1198 each carry phosphoserine. A compositionally biased stretch (polar residues) spans 1132–1159; it reads SPEQSRFQSDSSSYPTVDSNSLLGQSRL. Residues 1204–1214 show a composition bias toward basic and acidic residues; the sequence is DTLRTPPRERS. Thr-1208 carries the phosphothreonine modification. Ser-1214, Ser-1219, Ser-1227, Ser-1254, Ser-1257, Ser-1258, Ser-1266, Ser-1270, and Ser-1271 each carry phosphoserine. Residues 1216 to 1233 are compositionally biased toward polar residues; that stretch reads AGSSPETKEQNSALPTSS. Positions 1283–1292 are enriched in polar residues; that stretch reads TLDQSQSQAS. 15 positions are modified to phosphoserine: Ser-1311, Ser-1318, Ser-1320, Ser-1326, Ser-1329, Ser-1336, Ser-1348, Ser-1368, Ser-1382, Ser-1383, Ser-1384, Ser-1387, Ser-1401, Ser-1403, and Ser-1404. Residues 1318-1328 are compositionally biased toward polar residues; the sequence is SNSPLRENSFG. Positions 1376-1386 are enriched in polar residues; it reads TRSSGHSSSEL. The residue at position 1413 (Thr-1413) is a Phosphothreonine. Phosphoserine is present on residues Ser-1415, Ser-1421, Ser-1423, and Ser-1424. Thr-1434 bears the Phosphothreonine mark. Residues 1441-1452 are compositionally biased toward low complexity; sequence SGSSPGLRDGSG. Phosphoserine is present on residues Ser-1444 and Ser-1451. Thr-1453 carries the phosphothreonine modification. A compositionally biased stretch (polar residues) spans 1453 to 1463; the sequence is TPSRHSLSGSS. Phosphoserine occurs at positions 1458, 1460, 1462, and 1463. Thr-1472 bears the Phosphothreonine mark. Ser-1482 and Ser-1483 each carry phosphoserine. A Phosphothreonine modification is found at Thr-1492. Ser-1497, Ser-1499, Ser-1501, and Ser-1502 each carry phosphoserine. A Phosphothreonine modification is found at Thr-1511. 4 positions are modified to phosphoserine: Ser-1517, Ser-1519, Ser-1521, and Ser-1522. Phosphothreonine is present on Thr-1531. Polar residues predominate over residues 1534 to 1544; sequence GQRSRSGSSQE. Residues Ser-1537, Ser-1539, Ser-1541, Ser-1542, and Ser-1552 each carry the phosphoserine modification. The segment covering 1555–1567 has biased composition (basic and acidic residues); sequence ERSESDSSPDSKA. Positions 1568–1577 are enriched in basic residues; sequence KTRTPLRQRS. Phosphoserine occurs at positions 1577, 1579, 1581, 1582, 1598, 1600, 1601, 1616, 1620, 1621, 1648, 1658, 1691, 1693, and 1694. A compositionally biased stretch (low complexity) spans 1638-1657; it reads SGSSSKGRGPSPEGSSSTES. Basic residues predominate over residues 1681–1691; it reads KSRTPPRRRSS. Position 1698 is a phosphothreonine (Thr-1698). Phosphoserine occurs at positions 1727, 1729, 1731, 1732, 1762, and 1764. 2 stretches are compositionally biased toward basic residues: residues 1769–1789 and 1798–1816; these read GLQR…RRRD and SRRR…RRRG. Ser-1818, Ser-1822, Ser-1854, Ser-1857, Ser-1876, and Ser-1878 each carry phosphoserine. The span at 1834–1854 shows a compositional bias: basic residues; it reads SSRRRRGRSRTPPTSRKRSRS. Residues 1862 to 2068 show a composition bias toward basic residues; the sequence is KRSRSRASPA…PRTARGKRSL (207 aa). A Phosphothreonine modification is found at Thr-1880. Phosphoserine is present on residues Ser-1884 and Ser-1890. Thr-1892 is subject to Phosphothreonine. 5 positions are modified to phosphoserine: Ser-1893, Ser-1916, Ser-1919, Ser-1923, and Ser-1925. Thr-1927 and Thr-1931 each carry phosphothreonine. Phosphoserine occurs at positions 1946 and 1948. Phosphothreonine is present on residues Thr-1950 and Thr-1954. Residues Ser-1958 and Ser-1960 each carry the phosphoserine modification. 2 positions are modified to phosphothreonine: Thr-1962 and Thr-1966. Phosphoserine is present on residues Ser-1970, Ser-1972, and Ser-1975. Thr-1978 carries the phosphothreonine modification. A phosphoserine mark is found at Ser-1984, Ser-1987, Ser-1996, Ser-1999, Ser-2008, Ser-2011, Ser-2018, and Ser-2020. At Thr-2022 the chain carries Phosphothreonine. Ser-2030 and Ser-2032 each carry phosphoserine. A Phosphothreonine modification is found at Thr-2034. Phosphoserine occurs at positions 2042, 2044, 2046, and 2067. The residue at position 2069 (Thr-2069) is a Phosphothreonine. Residues 2070–2095 show a composition bias toward low complexity; that stretch reads RSPPAIRRRSASGSSSDRSRSATPPA. Ser-2071 and Ser-2090 each carry phosphoserine. Phosphothreonine is present on Thr-2092. A compositionally biased stretch (polar residues) spans 2097-2124; the sequence is RNHSGSRTPPVALNSSRMSCFSRPSMSP. Residues Ser-2100 and Ser-2102 each carry the phosphoserine modification. Thr-2104 carries the phosphothreonine modification. Residues Ser-2118, Ser-2121, Ser-2123, and Ser-2132 each carry the phosphoserine modification. Position 2144 is a phosphothreonine (Thr-2144). Omega-N-methylarginine occurs at positions 2194, 2207, 2231, and 2246. The residue at position 2272 (Ser-2272) is a Phosphoserine. Residues Arg-2274 and Arg-2288 each carry the omega-N-methylarginine modification. Phosphothreonine is present on residues Thr-2289, Thr-2291, and Thr-2302. Ser-2310 is subject to Phosphoserine. The interval 2311–2342 is disordered; it reads LTGSGTPPTAANYPSSSRTPQAPASANLVGPR. A phosphothreonine mark is found at Thr-2316 and Thr-2329. The segment covering 2317–2334 has biased composition (polar residues); sequence PPTAANYPSSSRTPQAPA. The residue at position 2335 (Ser-2335) is a Phosphoserine. An Omega-N-methylarginine modification is found at Arg-2342. Phosphoserine occurs at positions 2343, 2368, and 2376. Thr-2381 is subject to Phosphothreonine. The residue at position 2382 (Ser-2382) is a Phosphoserine. At Arg-2384 the chain carries Asymmetric dimethylarginine; alternate. At Arg-2384 the chain carries Omega-N-methylarginine; alternate. The tract at residues 2389-2752 is disordered; sequence AYERVSGRTS…PMRHRSSRSP (364 aa). Phosphoserine is present on residues Ser-2394, Ser-2398, and Ser-2407. The residue at position 2409 (Thr-2409) is a Phosphothreonine. Phosphoserine occurs at positions 2412, 2415, 2426, 2429, 2449, and 2453. Residues 2426-2439 show a composition bias toward polar residues; the sequence is SPSSRMGQAPSQSL. Polar residues predominate over residues 2455 to 2473; the sequence is FSDQSRCLIAQTTPVAGSQ. Low complexity-rich tracts occupy residues 2474 to 2487, 2515 to 2526, and 2533 to 2567; these read SLSS…TSSA, AQQPSALAALQP, and SSSS…EGSS. Residue Ser-2581 is modified to Phosphoserine. Residue Thr-2583 is modified to Phosphothreonine. Residue Lys-2587 forms a Glycyl lysine isopeptide (Lys-Gly) (interchain with G-Cter in SUMO2) linkage. The residue at position 2599 (Thr-2599) is a Phosphothreonine. Positions 2608–2648 are enriched in low complexity; sequence SSSSSSSSSSSSSSSSSSSSSSSSSSSSSSSSSSSSSSSSS. Positions 2651–2668 are enriched in pro residues; that stretch reads PAKPGPQALPKPASPKKP. Phosphoserine is present on residues Ser-2664, Ser-2675, Ser-2677, Ser-2684, Ser-2688, Ser-2690, Ser-2692, Ser-2694, Ser-2702, and Ser-2706. The span at 2669-2689 shows a compositional bias: basic and acidic residues; sequence PPGERRSRSPRKPIDSLRDSR. Low complexity predominate over residues 2707–2716; sequence PRDQQSSSSE. The segment covering 2717–2729 has biased composition (basic and acidic residues); that stretch reads RGSRRGQRGDSRS. Residue Thr-2738 is modified to Phosphothreonine. Ser-2740 is subject to Phosphoserine. The segment covering 2743–2752 has biased composition (basic residues); it reads PMRHRSSRSP.

It belongs to the CWC21 family. Component of pre-catalytic, catalytic and post-catalytic spliceosome complexes. Found in a pre-mRNA splicing complex with SFRS4, SFRS5, SNRP70, SNRPA1, SRRM1 and SRRM2. Component of the minor spliceosome, which splices U12-type introns. Interacts with DHX8. Interacts with CACTIN. As to expression, expressed in liver, placenta, and white blood cells.

The protein localises to the nucleus. Its subcellular location is the nucleus speckle. Its function is as follows. Required for pre-mRNA splicing as component of the spliceosome. As a component of the minor spliceosome, involved in the splicing of U12-type introns in pre-mRNAs. This chain is Serine/arginine repetitive matrix protein 2 (SRRM2), found in Homo sapiens (Human).